We begin with the raw amino-acid sequence, 300 residues long: Glycine--tRNA ligase alpha subunit (300 aa).

It belongs to the class-II aminoacyl-tRNA synthetase family. As to quaternary structure, tetramer of two alpha and two beta subunits.

It localises to the cytoplasm. The catalysed reaction is tRNA(Gly) + glycine + ATP = glycyl-tRNA(Gly) + AMP + diphosphate. The chain is Glycine--tRNA ligase alpha subunit (glyQ) from Buchnera aphidicola subsp. Baizongia pistaciae (strain Bp).